The following is a 72-amino-acid chain: Defensin-like protein 35 (72 aa).

The N-terminal stretch at 1–22 (MASNKISFSFVLCLYMCSLLDA) is a signal peptide. Intrachain disulfides connect Cys32–Cys58, Cys44–Cys67, and Cys48–Cys69.

This sequence belongs to the DEFL family.

It localises to the secreted. The sequence is that of Defensin-like protein 35 from Arabidopsis thaliana (Mouse-ear cress).